The chain runs to 335 residues: Phosphatidylcholine-sterol acyltransferase (335 aa).

Residues 1–18 form the signal peptide; sequence MKKWFVCLLGLVALTVQA. S34 (nucleophile) is an active-site residue. Residues D306 and H309 contribute to the active site.

Belongs to the 'GDSL' lipolytic enzyme family.

The catalysed reaction is a sterol + a 1,2-diacyl-sn-glycero-3-phosphocholine = a sterol ester + a 1-acyl-sn-glycero-3-phosphocholine. Fatty acid transfer between phosphatidylcholine and cholesterol. The polypeptide is Phosphatidylcholine-sterol acyltransferase (Aeromonas hydrophila).